An 889-amino-acid polypeptide reads, in one-letter code: Protein SEY1 homolog (889 aa).

Over 1-801 the chain is Cytoplasmic; that stretch reads MDTKTQIIDY…ETGAKMSLKN (801 aa). The GB1/RHD3-type G domain occupies 31-277; sequence GFNYNVIAIL…IPSDGFAHYC (247 aa). Residue 41-48 coordinates GTP; the sequence is GSQSSGKS. The segment at 429-449 is disordered; sequence RKDGKGGSSPSAGDKKDTKDT. Residues 679-699 adopt a coiled-coil conformation; sequence LDEIMDVLKSKLDEISDNLSS. Residues 802-822 form a helical membrane-spanning segment; it reads VPLFFWVILLILGWNELLFFT. The Lumenal portion of the chain corresponds to 823 to 825; that stretch reads RFF. A helical transmembrane segment spans residues 826-846; that stretch reads FRLNIILPLFLAAAVILSTLV. Residues 847 to 889 lie on the Cytoplasmic side of the membrane; sequence FNGNMEVLSIINKAVFFLAKNSFGVYRQLQAMGGKAAQGAAAD.

It belongs to the TRAFAC class dynamin-like GTPase superfamily. GB1/RHD3 GTPase family. RHD3 subfamily.

Its subcellular location is the endoplasmic reticulum membrane. In terms of biological role, probable GTP-binding protein involved in generating and maintaining the structure of the tubular endoplasmic reticulum network. The protein is Protein SEY1 homolog of Plasmodium vivax (strain Salvador I).